The chain runs to 278 residues: Putative pyruvate, phosphate dikinase regulatory protein (278 aa).

156 to 163 (GVSRTSKT) is an ADP binding site.

This sequence belongs to the pyruvate, phosphate/water dikinase regulatory protein family. PDRP subfamily.

The catalysed reaction is N(tele)-phospho-L-histidyl/L-threonyl-[pyruvate, phosphate dikinase] + ADP = N(tele)-phospho-L-histidyl/O-phospho-L-threonyl-[pyruvate, phosphate dikinase] + AMP + H(+). The enzyme catalyses N(tele)-phospho-L-histidyl/O-phospho-L-threonyl-[pyruvate, phosphate dikinase] + phosphate + H(+) = N(tele)-phospho-L-histidyl/L-threonyl-[pyruvate, phosphate dikinase] + diphosphate. Bifunctional serine/threonine kinase and phosphorylase involved in the regulation of the pyruvate, phosphate dikinase (PPDK) by catalyzing its phosphorylation/dephosphorylation. This Lactobacillus acidophilus (strain ATCC 700396 / NCK56 / N2 / NCFM) protein is Putative pyruvate, phosphate dikinase regulatory protein.